The primary structure comprises 393 residues: Anhydro-N-acetylmuramic acid kinase (393 aa).

9–16 (GTSADGVD) serves as a coordination point for ATP.

It belongs to the anhydro-N-acetylmuramic acid kinase family.

The catalysed reaction is 1,6-anhydro-N-acetyl-beta-muramate + ATP + H2O = N-acetyl-D-muramate 6-phosphate + ADP + H(+). It functions in the pathway amino-sugar metabolism; 1,6-anhydro-N-acetylmuramate degradation. It participates in cell wall biogenesis; peptidoglycan recycling. Catalyzes the specific phosphorylation of 1,6-anhydro-N-acetylmuramic acid (anhMurNAc) with the simultaneous cleavage of the 1,6-anhydro ring, generating MurNAc-6-P. Is required for the utilization of anhMurNAc either imported from the medium or derived from its own cell wall murein, and thus plays a role in cell wall recycling. The chain is Anhydro-N-acetylmuramic acid kinase from Acidithiobacillus ferrooxidans (strain ATCC 23270 / DSM 14882 / CIP 104768 / NCIMB 8455) (Ferrobacillus ferrooxidans (strain ATCC 23270)).